A 1297-amino-acid polypeptide reads, in one-letter code: Phosphoribosylformylglycinamidine synthase (1297 aa).

The segment at 305-324 (FPGAATGSGGEIRDEGATGR) is disordered. Residue 307 to 318 (GAATGSGGEIRD) participates in ATP binding. Mg(2+) contacts are provided by Asp679, Glu718, Asn722, and Asp886. Position 888 (Ser888) interacts with ATP. The Glutamine amidotransferase type-1 domain occupies 1044–1297 (IAVLREQGVN…LFRNARVFFK (254 aa)). Residue Cys1137 is the Nucleophile of the active site. Catalysis depends on residues His1262 and Glu1264.

It in the N-terminal section; belongs to the FGAMS family. In terms of assembly, monomer.

The protein localises to the cytoplasm. The catalysed reaction is N(2)-formyl-N(1)-(5-phospho-beta-D-ribosyl)glycinamide + L-glutamine + ATP + H2O = 2-formamido-N(1)-(5-O-phospho-beta-D-ribosyl)acetamidine + L-glutamate + ADP + phosphate + H(+). Its pathway is purine metabolism; IMP biosynthesis via de novo pathway; 5-amino-1-(5-phospho-D-ribosyl)imidazole from N(2)-formyl-N(1)-(5-phospho-D-ribosyl)glycinamide: step 1/2. Its function is as follows. Phosphoribosylformylglycinamidine synthase involved in the purines biosynthetic pathway. Catalyzes the ATP-dependent conversion of formylglycinamide ribonucleotide (FGAR) and glutamine to yield formylglycinamidine ribonucleotide (FGAM) and glutamate. In Mannheimia succiniciproducens (strain KCTC 0769BP / MBEL55E), this protein is Phosphoribosylformylglycinamidine synthase.